The following is a 360-amino-acid chain: Phospho-N-acetylmuramoyl-pentapeptide-transferase (360 aa).

Transmembrane regions (helical) follow at residues 21–41 (YLSF…LWMG), 73–93 (TMGG…WANL), 94–114 (SNPY…VGFV), 132–152 (WKYF…YAYG), 168–188 (VMPQ…VGTS), 199–219 (GLAI…AWAT), 236–256 (ASEL…FLWF), 263–283 (VFMG…IAVL), 288–308 (LVLV…ILQV), and 338–358 (VIVR…ATLK).

The protein belongs to the glycosyltransferase 4 family. MraY subfamily. Mg(2+) is required as a cofactor.

The protein localises to the cell inner membrane. It carries out the reaction UDP-N-acetyl-alpha-D-muramoyl-L-alanyl-gamma-D-glutamyl-meso-2,6-diaminopimeloyl-D-alanyl-D-alanine + di-trans,octa-cis-undecaprenyl phosphate = di-trans,octa-cis-undecaprenyl diphospho-N-acetyl-alpha-D-muramoyl-L-alanyl-D-glutamyl-meso-2,6-diaminopimeloyl-D-alanyl-D-alanine + UMP. It participates in cell wall biogenesis; peptidoglycan biosynthesis. Catalyzes the initial step of the lipid cycle reactions in the biosynthesis of the cell wall peptidoglycan: transfers peptidoglycan precursor phospho-MurNAc-pentapeptide from UDP-MurNAc-pentapeptide onto the lipid carrier undecaprenyl phosphate, yielding undecaprenyl-pyrophosphoryl-MurNAc-pentapeptide, known as lipid I. In Vibrio vulnificus (strain YJ016), this protein is Phospho-N-acetylmuramoyl-pentapeptide-transferase.